We begin with the raw amino-acid sequence, 242 residues long: Segregation and condensation protein A (242 aa).

It belongs to the ScpA family. As to quaternary structure, component of a cohesin-like complex composed of ScpA, ScpB and the Smc homodimer, in which ScpA and ScpB bind to the head domain of Smc. The presence of the three proteins is required for the association of the complex with DNA.

It localises to the cytoplasm. Participates in chromosomal partition during cell division. May act via the formation of a condensin-like complex containing Smc and ScpB that pull DNA away from mid-cell into both cell halves. This Streptococcus pneumoniae serotype 19F (strain G54) protein is Segregation and condensation protein A.